We begin with the raw amino-acid sequence, 112 residues long: Photosystem II reaction center Psb28 protein (112 aa).

The protein belongs to the Psb28 family. In terms of assembly, part of the photosystem II complex.

The protein localises to the cellular thylakoid membrane. This Synechococcus elongatus (strain ATCC 33912 / PCC 7942 / FACHB-805) (Anacystis nidulans R2) protein is Photosystem II reaction center Psb28 protein.